A 581-amino-acid chain; its full sequence is UvrABC system protein C (581 aa).

The GIY-YIG domain occupies 15–94 (REPGVYLFEQ…IKRHRPPYNV (80 aa)). Positions 202-237 (GVLADPLRREMEAAAQNQEFERAANLRDKLGAVEAL) constitute a UVR domain.

This sequence belongs to the UvrC family. As to quaternary structure, interacts with UvrB in an incision complex.

It localises to the cytoplasm. The UvrABC repair system catalyzes the recognition and processing of DNA lesions. UvrC both incises the 5' and 3' sides of the lesion. The N-terminal half is responsible for the 3' incision and the C-terminal half is responsible for the 5' incision. The sequence is that of UvrABC system protein C from Haloarcula marismortui (strain ATCC 43049 / DSM 3752 / JCM 8966 / VKM B-1809) (Halobacterium marismortui).